We begin with the raw amino-acid sequence, 61 residues long: Transcription elongation factor Spt4 (61 aa).

Zn(2+) is bound by residues Cys-6, Cys-9, Cys-18, and Cys-21.

The protein belongs to the archaeal Spt4 family. As to quaternary structure, heterodimer composed of Spt4 and Spt5.

Stimulates transcription elongation. This is Transcription elongation factor Spt4 from Pyrococcus furiosus (strain ATCC 43587 / DSM 3638 / JCM 8422 / Vc1).